The sequence spans 200 residues: Large ribosomal subunit protein uL4 (200 aa).

The interval 43-70 (RAQKTRAEVSGSGKKPWRQKGTGRARSG) is disordered.

This sequence belongs to the universal ribosomal protein uL4 family. Part of the 50S ribosomal subunit.

Its function is as follows. One of the primary rRNA binding proteins, this protein initially binds near the 5'-end of the 23S rRNA. It is important during the early stages of 50S assembly. It makes multiple contacts with different domains of the 23S rRNA in the assembled 50S subunit and ribosome. Functionally, forms part of the polypeptide exit tunnel. The polypeptide is Large ribosomal subunit protein uL4 (Glaesserella parasuis serovar 5 (strain SH0165) (Haemophilus parasuis)).